Here is a 434-residue protein sequence, read N- to C-terminus: Protein arginine N-methyltransferase 2 (434 aa).

Residues 155-198 (IQGEETTEEERKEEEPSNTSDIIDEQKVEQPKEDLKEDPSSNQE) form a disordered region. Residues 178–193 (DEQKVEQPKEDLKEDP) are compositionally biased toward basic and acidic residues. In terms of domain architecture, RMT2 spans 193–434 (PSSNQETYLK…YHPEARFMDV (242 aa)). S-adenosyl-L-methionine-binding positions include Y200, M230, 258 to 263 (FGMGII), 279 to 281 (EAH), 306 to 307 (WQ), and D327.

Belongs to the class I-like SAM-binding methyltransferase superfamily. RMT2 methyltransferase family. Monomer.

Its subcellular location is the cytoplasm. The protein resides in the nucleus. S-adenosyl-L-methionine-dependent protein-arginine N-methyltransferase that methylates the delta-nitrogen atom of arginine residues to form N5-methylarginine (type IV) in target proteins. Monomethylates ribosomal protein L12. The chain is Protein arginine N-methyltransferase 2 from Debaryomyces hansenii (strain ATCC 36239 / CBS 767 / BCRC 21394 / JCM 1990 / NBRC 0083 / IGC 2968) (Yeast).